The following is a 344-amino-acid chain: Phosphate acyltransferase (344 aa).

This sequence belongs to the PlsX family. Homodimer. Probably interacts with PlsY.

The protein localises to the cytoplasm. It catalyses the reaction a fatty acyl-[ACP] + phosphate = an acyl phosphate + holo-[ACP]. Its pathway is lipid metabolism; phospholipid metabolism. Catalyzes the reversible formation of acyl-phosphate (acyl-PO(4)) from acyl-[acyl-carrier-protein] (acyl-ACP). This enzyme utilizes acyl-ACP as fatty acyl donor, but not acyl-CoA. This Sphingopyxis alaskensis (strain DSM 13593 / LMG 18877 / RB2256) (Sphingomonas alaskensis) protein is Phosphate acyltransferase.